The sequence spans 214 residues: Octanoyltransferase (214 aa).

Positions 29–214 (STTPDEIWIL…EHLQKQLMPT (186 aa)) constitute a BPL/LPL catalytic domain. Substrate contacts are provided by residues 69–76 (RGGEITYH), 146–148 (ALG), and 159–161 (GLA). Cys-177 (acyl-thioester intermediate) is an active-site residue.

The protein belongs to the LipB family.

It is found in the cytoplasm. It catalyses the reaction octanoyl-[ACP] + L-lysyl-[protein] = N(6)-octanoyl-L-lysyl-[protein] + holo-[ACP] + H(+). Its pathway is protein modification; protein lipoylation via endogenous pathway; protein N(6)-(lipoyl)lysine from octanoyl-[acyl-carrier-protein]: step 1/2. Functionally, catalyzes the transfer of endogenously produced octanoic acid from octanoyl-acyl-carrier-protein onto the lipoyl domains of lipoate-dependent enzymes. Lipoyl-ACP can also act as a substrate although octanoyl-ACP is likely to be the physiological substrate. This is Octanoyltransferase from Polynucleobacter asymbioticus (strain DSM 18221 / CIP 109841 / QLW-P1DMWA-1) (Polynucleobacter necessarius subsp. asymbioticus).